Reading from the N-terminus, the 591-residue chain is L-fucose isomerase (591 aa).

Catalysis depends on proton acceptor residues Glu337 and Asp361. 3 residues coordinate Mn(2+): Glu337, Asp361, and His528.

This sequence belongs to the L-fucose isomerase family. Homohexamer. The cofactor is Mn(2+).

The protein localises to the cytoplasm. It catalyses the reaction L-fucose = L-fuculose. The protein operates within carbohydrate degradation; L-fucose degradation; L-lactaldehyde and glycerone phosphate from L-fucose: step 1/3. In terms of biological role, converts the aldose L-fucose into the corresponding ketose L-fuculose. The protein is L-fucose isomerase of Salmonella paratyphi A (strain ATCC 9150 / SARB42).